Consider the following 258-residue polypeptide: Phosphonates import ATP-binding protein PhnC 1 (258 aa).

The ABC transporter domain occupies 2 to 246; it reads IEFKDVGLVY…TFEEIYGRSI (245 aa). 35–42 lines the ATP pocket; it reads GLSGAGKS.

The protein belongs to the ABC transporter superfamily. Phosphonates importer (TC 3.A.1.9.1) family. The complex is composed of two ATP-binding proteins (PhnC), two transmembrane proteins (PhnE) and a solute-binding protein (PhnD).

The protein resides in the cell membrane. It catalyses the reaction phosphonate(out) + ATP + H2O = phosphonate(in) + ADP + phosphate + H(+). Its function is as follows. Part of the ABC transporter complex PhnCDE involved in phosphonates import. Responsible for energy coupling to the transport system. In Oceanobacillus iheyensis (strain DSM 14371 / CIP 107618 / JCM 11309 / KCTC 3954 / HTE831), this protein is Phosphonates import ATP-binding protein PhnC 1.